A 508-amino-acid polypeptide reads, in one-letter code: tRNA(Ile2) 2-agmatinylcytidine synthetase TiaS (508 aa).

A DNA-binding region (OB) is located at residues 367-427; that stretch reads ITGGHVLIEL…YQLNIEKINV (61 aa).

Belongs to the TiaS family.

It is found in the cytoplasm. It carries out the reaction cytidine(34) in tRNA(Ile2) + agmatine + ATP + H2O = 2-agmatinylcytidine(34) in tRNA(Ile2) + AMP + 2 phosphate + 2 H(+). ATP-dependent agmatine transferase that catalyzes the formation of 2-agmatinylcytidine (agm2C) at the wobble position (C34) of tRNA(Ile2), converting the codon specificity from AUG to AUA. The chain is tRNA(Ile2) 2-agmatinylcytidine synthetase TiaS from Methanococcus voltae (strain ATCC BAA-1334 / A3).